The following is a 138-amino-acid chain: Phospholipase A2 homolog crotoxin acid subunit CA (138 aa).

A signal peptide spans 1 to 37 (MRALWIVAVLLVGVEGSLVEFETLMMKIAGRSGISYY). 8 cysteine pairs are disulfide-bonded: C42/C131, C44/C60, C59/C111, C65/C138, C66/C104, C73/C97, C91/C102, and C131/C138. Residues 79–82 (VYTY) constitute a propeptide that is removed on maturation. Pyrrolidone carboxylic acid is present on Q84. The propeptide occupies 119–124 (YDYKYL). Q125 is subject to Pyrrolidone carboxylic acid.

This sequence belongs to the phospholipase A2 family. Group II subfamily. D49 sub-subfamily. As to quaternary structure, heterodimer of one of the acidic (CA1, CA2, CA3 or CA4) and one of the basic (CBa1, CBa2, CBb, CBc or CBd) subunits; non-covalently linked. The acidic subunit is non-toxic, without enzymatic activity and comprises 3 peptides that are cross-linked by 5 disulfide bridges. The basic subunit is toxic, has phospholipase A2 activity and is composed of a single chain. Multiple variants of each subunit give different crotoxin complexes that can be subdivided into 2 classes: (1) those of high toxicity, low PLA2 activity (CBb, CBc and CBd linked with high affinity to any CA) and high stability (K(d)=4.5 nM) and (2) those of moderate toxicity, high PLA2 activity (CBa2 linked with low affinity to any CA) and low stability (K(d)=25 nM). Expressed by the venom gland.

The protein localises to the secreted. Functionally, CAalpha-CAbeta-CAgamma: The acidic subunit of crotoxin (CA) is a heterotrimer of three disulfide-linked chains generated by post-translational maturation of a PLA2-like precursor. CA has no PLA2 activity and is not neurotoxic by itself, but plays several important functions in the crotoxin complex by increasing the lethal potency of the uncomplexed CB subunit. It acts by physically occluding the hydrophobic interfacial binding surface (IBS) of CB. This effect decreases the adsorption of CB to phospholipid membranes, targeting the crotoxin complex to reach the specific presynaptic receptor (R48) at the neuromuscular junction. It also prevents the formation of the reactive CB dimer. Moreover, the CA subunit inhibits the catalytic activity by partially masking the catalytic site of CB and inhibits its anticoagulant activity. Its function is as follows. Heterodimer CA-CB: Crotoxin is a potent presynaptic neurotoxin that possesses phospholipase A2 (PLA2) activity and exerts a lethal action by blocking neuromuscular transmission. It consists of a non-covalent association of a basic and weakly toxic PLA2 subunit (CBa2, CBb, CBc, or CBd), with a small acidic, non-enzymatic and non-toxic subunit (CA1, CA2, CA3 or CA4). The complex acts by binding to a specific 48-kDa protein (R48/CAPT) receptor located on presynaptic membranes, forming a transient ternary complex CA-CB-R48, followed by dissociation of the CA-CB complex and release of the CA subunit. At equilibrium, only the CB subunits remain associated with the specific crotoxin receptor. In addition to neurotoxicity, crotoxin has been found to exert myotoxicity, nephrotoxicity, and cardiovascular toxicity. Moreover, anti-inflammatory, immunomodulatory, anti-tumor and analgesic effects of crotoxin have also been reported. Found in the venom as a monomer and stabilized by one disulfide bond (Cys-131 and Cys-138). This peptide induces potent antinociceptive effects in acute and chronic pain models. This effect is mediated by the release of peripheral dynorphin A, an endogenous agonist of kappa-opioid receptors, and this release is dependent on cannabinoid receptor CB2 activation. This is Phospholipase A2 homolog crotoxin acid subunit CA from Crotalus durissus terrificus (South American rattlesnake).